A 104-amino-acid polypeptide reads, in one-letter code: Pyrimidine/purine nucleoside phosphorylase (104 aa).

This sequence belongs to the nucleoside phosphorylase PpnP family.

The catalysed reaction is a purine D-ribonucleoside + phosphate = a purine nucleobase + alpha-D-ribose 1-phosphate. It carries out the reaction adenosine + phosphate = alpha-D-ribose 1-phosphate + adenine. It catalyses the reaction cytidine + phosphate = cytosine + alpha-D-ribose 1-phosphate. The enzyme catalyses guanosine + phosphate = alpha-D-ribose 1-phosphate + guanine. The catalysed reaction is inosine + phosphate = alpha-D-ribose 1-phosphate + hypoxanthine. It carries out the reaction thymidine + phosphate = 2-deoxy-alpha-D-ribose 1-phosphate + thymine. It catalyses the reaction uridine + phosphate = alpha-D-ribose 1-phosphate + uracil. The enzyme catalyses xanthosine + phosphate = alpha-D-ribose 1-phosphate + xanthine. Its function is as follows. Catalyzes the phosphorolysis of diverse nucleosides, yielding D-ribose 1-phosphate and the respective free bases. Can use uridine, adenosine, guanosine, cytidine, thymidine, inosine and xanthosine as substrates. Also catalyzes the reverse reactions. In Geotalea uraniireducens (strain Rf4) (Geobacter uraniireducens), this protein is Pyrimidine/purine nucleoside phosphorylase.